We begin with the raw amino-acid sequence, 356 residues long: Histidinol-phosphate aminotransferase (356 aa).

The residue at position 214 (Lys214) is an N6-(pyridoxal phosphate)lysine.

It belongs to the class-II pyridoxal-phosphate-dependent aminotransferase family. Histidinol-phosphate aminotransferase subfamily. As to quaternary structure, homodimer. The cofactor is pyridoxal 5'-phosphate.

It catalyses the reaction L-histidinol phosphate + 2-oxoglutarate = 3-(imidazol-4-yl)-2-oxopropyl phosphate + L-glutamate. It participates in amino-acid biosynthesis; L-histidine biosynthesis; L-histidine from 5-phospho-alpha-D-ribose 1-diphosphate: step 7/9. This Escherichia coli O127:H6 (strain E2348/69 / EPEC) protein is Histidinol-phosphate aminotransferase.